Reading from the N-terminus, the 119-residue chain is Large ribosomal subunit protein bL20 (119 aa).

This sequence belongs to the bacterial ribosomal protein bL20 family.

Functionally, binds directly to 23S ribosomal RNA and is necessary for the in vitro assembly process of the 50S ribosomal subunit. It is not involved in the protein synthesizing functions of that subunit. The chain is Large ribosomal subunit protein bL20 from Neisseria gonorrhoeae (strain ATCC 700825 / FA 1090).